The following is a 354-amino-acid chain: MGTKGLPLYPDPCRAPGTKTQNTLASDSLAREGPSSNSSFHSSEEEGTDLEGDMLDCSGSRPLLESEEEDENCRPLQEKLGEAALFSESGVCTEPEERGQGGKKSQFLPINQRASDDLGEPDVFATAPFRSSLVPADDVDIFSKAPFVSKGSVAPSQMDEVDVFSRAPFTKKRSMEEFLAVQGSSQDLPMQANLSQSNEGPLLAGRDRAIYTPAQAQYPMTGFAPQAGLPSHSVQVADHFDGNSPRGSPMSSGGHPVDRNRGLQPQKEAFSGPAAGKPFHPQALSKYSRHYSPEDELSAEAQPIAAYKIVSQSNKQLLAGSVSVTSLSSRTTELATADPFALAPFPSKAGKQKP.

2 disordered regions span residues 1–74 (MGTK…ENCR) and 87–115 (SESGVCTEPEERGQGGKKSQFLPINQRAS). Lys-19 carries the N6-acetyllysine modification. The span at 32 to 41 (EGPSSNSSFH) shows a compositional bias: low complexity. Acidic residues predominate over residues 45 to 54 (EEGTDLEGDM). 2 positions are modified to phosphoserine: Ser-115 and Ser-174. Positions 182–199 (QGSSQDLPMQANLSQSNE) are enriched in polar residues. 2 disordered regions span residues 182 to 208 (QGSSQDLPMQANLSQSNEGPLLAGRDR) and 235 to 298 (QVAD…DELS). Tyr-291 carries the phosphotyrosine modification. The residue at position 292 (Ser-292) is a Phosphoserine.

This is an uncharacterized protein from Mus musculus (Mouse).